A 431-amino-acid chain; its full sequence is F-box/kelch-repeat protein At4g19930 (431 aa).

Residues 37–83 (HEPMPYIPFDLVIEILTRLPAKSLMRFKSVSKLWSSLICSRTFTNRL) enclose the F-box domain. 2 Kelch repeats span residues 143–189 (LSHV…KNKK) and 227–275 (WVFI…PMLV).

The chain is F-box/kelch-repeat protein At4g19930 from Arabidopsis thaliana (Mouse-ear cress).